Consider the following 414-residue polypeptide: Protein SOSEKI 2 (414 aa).

The interval 44–135 (RRVQVVYYLT…YVLKGSEITD (92 aa)) is DIX-like oligomerization domain. The tract at residues 171-273 (SFDDAELYVG…GDPVEPGSGR (103 aa)) is disordered. Residues 173–192 (DDAELYVGEEEEEEDGEYEL) show a composition bias toward acidic residues. A compositionally biased stretch (polar residues) spans 205–229 (PQSRCSRGVSTETMESTEQKPNLTK). Positions 230–242 (TEQDLQVRSDSSD) are enriched in basic and acidic residues. An Association to cell membranes motif is present at residues 283–284 (CG).

The protein belongs to the SOSEKI family. Homodimer. Forms long polymer filaments with other SOKs proteins polymers (e.g. SOK1, SOK2, SOK3 and SOK4) crucial for polar localization and biological activity. Binds to ANGUSTIFOLIA (AN). In terms of tissue distribution, expressed during embryogenesis and in roots.

The protein resides in the cell membrane. Part of a three-gene cluster containing FLC, UFC and DFC, which is coordinately regulated in response to vernalization. Also regulated by FLX. SOSEKI proteins (SOK1-5) locally interpret global polarity cues and can influence cell division orientation to coordinate cell polarization relative to body axes, probably by guiding ANGUSTIFOLIA (AN) polarized localization. The sequence is that of Protein SOSEKI 2 from Arabidopsis thaliana (Mouse-ear cress).